The following is a 157-amino-acid chain: Small ribosomal subunit protein uS7 (157 aa).

The protein belongs to the universal ribosomal protein uS7 family. Part of the 30S ribosomal subunit. Contacts proteins S9 and S11.

Its function is as follows. One of the primary rRNA binding proteins, it binds directly to 16S rRNA where it nucleates assembly of the head domain of the 30S subunit. Is located at the subunit interface close to the decoding center, probably blocks exit of the E-site tRNA. In Blochmanniella floridana, this protein is Small ribosomal subunit protein uS7.